Here is a 384-residue protein sequence, read N- to C-terminus: MKALVIGGGIGGLSAAVGLKNAGIHCEVFEAVKEIKPVGAAISIWPNGVKCMKHLGMGDIIESYGGPMHFLAYKDYLRGEDLTQFSLAPLVERTGGRPCPVPALNLQREMLDFWGRDAVQFGKRVTRCEEHADGVRVWFTDGSMAEGDFLIAADGSHSALRPYVLGYTPERRYAGYVNWNGLVEIDEAIAPGNQWTTFVGEGKRVSLMPVSDGRFYFFFDVPLPAGLAEDRSTLRADLSRYFSGWAPQVQKLIAALDPQTTNRIEIHDIEPFERLVRGKVALLGDAGHSTTPDIGQGGCAALEDAVVLGDLFRESRDIAGVLRQYEAQRCDRVRDLVLKARKRCDVTHGKDMALTQAWYQELETETGERIINGLCETIQGGPLG.

FAD is bound by residues Gly11, 30-31 (EA), Ser43, and Val125. Residues Asn178, Arg204, and 216–218 (YFF) contribute to the substrate site. Residues Asp285 and 295-299 (GQGGC) contribute to the FAD site.

Belongs to the FAD-dependent urate hydroxylase family. FAD is required as a cofactor.

It carries out the reaction urate + NADH + O2 + H(+) = 5-hydroxyisourate + NAD(+) + H2O. It participates in purine metabolism; urate degradation. In terms of biological role, catalyzes the hydroxylation of uric acid to 5-hydroxyisourate. In Klebsiella oxytoca, this protein is FAD-dependent urate hydroxylase (hpxO).